A 126-amino-acid chain; its full sequence is Histone H2B 3 (126 aa).

Over residues 1-12 (MPEPAKSAPAPK) the composition is skewed to low complexity. A disordered region spans residues 1-34 (MPEPAKSAPAPKKGSKKAVTKTQKKGDKKRRKTR). An N6-acetyllysine mark is found at Lys6 and Lys13. The segment covering 13 to 34 (KGSKKAVTKTQKKGDKKRRKTR) has biased composition (basic residues). Ser15 carries the post-translational modification Phosphoserine. N6-acetyllysine is present on residues Lys16 and Lys21. Ser113 is a glycosylation site (O-linked (GlcNAc) serine). Lys121 participates in a covalent cross-link: Glycyl lysine isopeptide (Lys-Gly) (interchain with G-Cter in ubiquitin).

Belongs to the histone H2B family. As to quaternary structure, the nucleosome is a histone octamer containing two molecules each of H2A, H2B, H3 and H4 assembled in one H3-H4 heterotetramer and two H2A-H2B heterodimers. The octamer wraps approximately 147 bp of DNA. Post-translationally, monoubiquitination of Lys-121 by the BRE1 gives a specific tag for epigenetic transcriptional activation and is also prerequisite for histone H3 'Lys-4' and 'Lys-79' methylation. In terms of processing, phosphorylated on Ser-15 during apoptosis; which facilitates apoptotic chromatin condensation. GlcNAcylation at Ser-113 promotes monoubiquitination of Lys-121. It fluctuates in response to extracellular glucose, and associates with transcribed genes.

The protein localises to the nucleus. Its subcellular location is the chromosome. Core component of nucleosome. Nucleosomes wrap and compact DNA into chromatin, limiting DNA accessibility to the cellular machineries which require DNA as a template. Histones thereby play a central role in transcription regulation, DNA repair, DNA replication and chromosomal stability. DNA accessibility is regulated via a complex set of post-translational modifications of histones, also called histone code, and nucleosome remodeling. In Danio rerio (Zebrafish), this protein is Histone H2B 3 (hist2h2l).